Reading from the N-terminus, the 101-residue chain is Small ubiquitin-related modifier 1 (101 aa).

S2 carries the post-translational modification N-acetylserine. The residue at position 2 (S2) is a Phosphoserine. A Glycyl lysine isopeptide (Lys-Gly) (interchain with G-Cter in SUMO1); alternate cross-link involves residue K7. K7 participates in a covalent cross-link: Glycyl lysine isopeptide (Lys-Gly) (interchain with G-Cter in SUMO2); alternate. Phosphoserine is present on S9. Residues K16, K17, and K23 each participate in a glycyl lysine isopeptide (Lys-Gly) (interchain with G-Cter in SUMO2) cross-link. The tract at residues 16–25 (KKEGEYIKLK) is (Microbial infection) Interaction with Tula hantavirus. One can recognise a Ubiquitin-like domain in the interval 20 to 97 (EYIKLKVIGQ…IEVYQEQTGG (78 aa)). A Glycyl lysine isopeptide (Lys-Gly) (interchain with G-Cter in SUMO1) cross-link involves residue K25. Position 32 is a phosphoserine (S32). Residues K37, K39, K45, and K46 each participate in a glycyl lysine isopeptide (Lys-Gly) (interchain with G-Cter in SUMO2) cross-link. Positions 37–40 (KVKM) are (Microbial infection) Interaction with Tula hantavirus. G97 is covalently cross-linked (Glycyl lysine isopeptide (Gly-Lys) (interchain with K-? in acceptor proteins)). The propeptide occupies 98 to 101 (HSTV).

Belongs to the ubiquitin family. SUMO subfamily. In terms of assembly, covalently attached to KCNB1; UBE2I increases cross-linking with KCNB1 and PIAS1 decreases cross-links with KCNB1. Interacts with SAE2, RANBP2, PIAS1 and PIAS2. Interacts with PRKN. Covalently attached to a number of proteins such as IKFZ1, PML, RANGAP1, HIPK2, SP100, p53, p73-alpha, MDM2, JUN, DNMT3B and TDG. Also interacts with HIF1A, HIPK2, HIPK3, CHD3, EXOSC9, RAD51 and RAD52. Interacts with USP25 (via ts SIM domain); the interaction weakly sumoylates USP25. Interacts with SIMC1, CASP8AP2, RNF111 and SOBP (via SIM domains). Interacts with BHLHE40/DEC1. Interacts with RWDD3. Interacts with UBE2I/UBC9 and this interaction is enhanced in the presence of RWDD3. Interacts with MTA1. Interacts with SENP2. Interacts with HINT1. As to quaternary structure, (Microbial infection) Interacts with Epstein-barr virus BGLF4. (Microbial infection) Interacts (via N-terminus) with Tula hantavirus nucleoprotein. In terms of assembly, (Microbial infection) Interacts (via N-terminus) with Hantaan hantavirus nucleoprotein. Post-translationally, cleavage of precursor form by SENP1 or SENP2 is necessary for function. In terms of processing, polymeric SUMO1 chains undergo polyubiquitination by RNF4.

Its subcellular location is the nucleus membrane. The protein resides in the nucleus speckle. It is found in the cytoplasm. The protein localises to the nucleus. It localises to the PML body. Its subcellular location is the cell membrane. In terms of biological role, ubiquitin-like protein that can be covalently attached to proteins as a monomer or a lysine-linked polymer. Covalent attachment via an isopeptide bond to its substrates requires prior activation by the E1 complex SAE1-SAE2 and linkage to the E2 enzyme UBE2I, and can be promoted by E3 ligases such as PIAS1-4, RANBP2 or CBX4. This post-translational modification on lysine residues of proteins plays a crucial role in a number of cellular processes such as nuclear transport, DNA replication and repair, mitosis and signal transduction. Involved for instance in targeting RANGAP1 to the nuclear pore complex protein RANBP2. Covalently attached to the voltage-gated potassium channel KCNB1; this modulates the gating characteristics of KCNB1. Polymeric SUMO1 chains are also susceptible to polyubiquitination which functions as a signal for proteasomal degradation of modified proteins. May also regulate a network of genes involved in palate development. Covalently attached to ZFHX3. In Homo sapiens (Human), this protein is Small ubiquitin-related modifier 1 (SUMO1).